A 228-amino-acid polypeptide reads, in one-letter code: Abnormal cell migration protein 18 (228 aa).

The N-terminal stretch at 1–19 is a signal peptide; the sequence is MTFTLRLLVLCTVYSYVIS. Residues asparagine 135 and asparagine 159 are each glycosylated (N-linked (GlcNAc...) asparagine).

In terms of tissue distribution, expressed in body wall muscle.

Its subcellular location is the secreted. The protein resides in the extracellular space. It localises to the extracellular matrix. It is found in the basement membrane. Required for the directional control of distal tip cell migration during gonadogenesis, probably by recruiting fibulin fbl-1 to the gonad basement membrane. In Caenorhabditis elegans, this protein is Abnormal cell migration protein 18.